The following is a 226-amino-acid chain: UPF0758 protein Daro_3142 (226 aa).

Positions 103 to 226 constitute an MPN domain; sequence SFTSPGKVRD…PLSFAERGLL (124 aa). Zn(2+) contacts are provided by histidine 174, histidine 176, and aspartate 187. The JAMM motif motif lies at 174–187; that stretch reads HNHPSGIAEPSRAD.

Belongs to the UPF0758 family.

The sequence is that of UPF0758 protein Daro_3142 from Dechloromonas aromatica (strain RCB).